A 166-amino-acid chain; its full sequence is Cyclic pyranopterin monophosphate synthase (166 aa).

Substrate is bound by residues 83 to 85 (LCH) and 121 to 122 (ME). Residue Asp136 is part of the active site.

Belongs to the MoaC family. In terms of assembly, homohexamer; trimer of dimers.

The catalysed reaction is (8S)-3',8-cyclo-7,8-dihydroguanosine 5'-triphosphate = cyclic pyranopterin phosphate + diphosphate. It functions in the pathway cofactor biosynthesis; molybdopterin biosynthesis. Functionally, catalyzes the conversion of (8S)-3',8-cyclo-7,8-dihydroguanosine 5'-triphosphate to cyclic pyranopterin monophosphate (cPMP). The chain is Cyclic pyranopterin monophosphate synthase from Syntrophobacter fumaroxidans (strain DSM 10017 / MPOB).